We begin with the raw amino-acid sequence, 400 residues long: Protein screw (400 aa).

An N-terminal signal peptide occupies residues 1-16 (MLNVFFLTSLFYAASA). The propeptide occupies 17–277 (TTYVTTNNHI…RFKRDLEKRR (261 aa)). N-linked (GlcNAc...) asparagine glycans are attached at residues asparagine 165, asparagine 189, asparagine 201, asparagine 304, and asparagine 342. Cystine bridges form between cysteine 300/cysteine 365, cysteine 329/cysteine 397, and cysteine 333/cysteine 399.

It belongs to the TGF-beta family. In terms of assembly, heterodimers of scw/dpp are the active subunit, dpp/dpp homodimers elicit a basal response and scw/scw homodimers alone are ineffective in specifying a dorsal pattern. Ubiquitously expressed during early stages of embryogenesis, but the effect on development appears graded and is restricted to the dorsal side of the embryo.

Its subcellular location is the secreted. Part of the signal that specifies dorsal cell fates in the embryo. Acts together with dpp. This chain is Protein screw (scw), found in Drosophila melanogaster (Fruit fly).